A 194-amino-acid polypeptide reads, in one-letter code: Peptidyl-tRNA hydrolase (194 aa).

A tRNA-binding site is contributed by tyrosine 17. Histidine 22 (proton acceptor) is an active-site residue. TRNA is bound by residues phenylalanine 68, asparagine 70, and asparagine 116.

Belongs to the PTH family. As to quaternary structure, monomer.

The protein localises to the cytoplasm. The enzyme catalyses an N-acyl-L-alpha-aminoacyl-tRNA + H2O = an N-acyl-L-amino acid + a tRNA + H(+). In terms of biological role, hydrolyzes ribosome-free peptidyl-tRNAs (with 1 or more amino acids incorporated), which drop off the ribosome during protein synthesis, or as a result of ribosome stalling. Functionally, catalyzes the release of premature peptidyl moieties from peptidyl-tRNA molecules trapped in stalled 50S ribosomal subunits, and thus maintains levels of free tRNAs and 50S ribosomes. The chain is Peptidyl-tRNA hydrolase from Actinobacillus pleuropneumoniae serotype 5b (strain L20).